The primary structure comprises 526 residues: MLGRTLREVSAALKQGQITPTELCQKCLSLIKKTKFLNAYITVSEEVALKQAEESEKRYKKGHSLGDLDGIPIAVKDNFSTSGIETTCASNMLKGYVPPYNATVVQKLLDQGAVLMGKTNLDEFAMGSGSTDGVFGPVKNPWSYSKQYKEKTKHKAHGENEDSNWLITGGSSGGSAAAVATFTCFAALGSDTGGSTRNPAAHCGVVGFKPSYGLVSRHGLIPLVNSMDVPGILTRCVDDAAIVLGMLAGHDPKDSTTVQDPVKPFTLPSLTDVSKLCIGIPKEYLTPELSSEVQSLWSKAANLFESEGAKVIEVSLPHTSYSIVCYHVLCTSEVASNMARFDGLEYGHRCDIDVSTEAMYAATRREGFNDVVRGRILSGNFFLLKENYENYFIKAQKVRRLIANDFVNVFNSGVDVLLTPTTLREAVPYQEFIKEDNRTRSAQDDIFTQAVNMAGLPAVSPVALSNQGLPVGLQFIGRAFHDQQLLTVAKWFEKQVQFPVTQLQELMDDCSSVFEIEKLASVSLKQ.

Active-site charge relay system residues include Lys-76 and Ser-171. The active-site Acyl-ester intermediate is Ser-195.

This sequence belongs to the amidase family. GatA subfamily. Subunit of the heterotrimeric GatCAB amidotransferase (AdT) complex, composed of A (QRSL1), B (GATB) and C (GATC) subunits.

It localises to the mitochondrion. It catalyses the reaction L-glutamyl-tRNA(Gln) + L-glutamine + ATP + H2O = L-glutaminyl-tRNA(Gln) + L-glutamate + ADP + phosphate + H(+). Functionally, allows the formation of correctly charged Gln-tRNA(Gln) through the transamidation of misacylated Glu-tRNA(Gln) in the mitochondria. The reaction takes place in the presence of glutamine and ATP through an activated gamma-phospho-Glu-tRNA(Gln). The protein is Glutamyl-tRNA(Gln) amidotransferase subunit A, mitochondrial of Canis lupus familiaris (Dog).